The primary structure comprises 254 residues: 4-hydroxy-tetrahydrodipicolinate reductase (254 aa).

Residue 7–12 (GASGRI) coordinates NAD(+). NADP(+) is bound at residue Arg35. NAD(+) contacts are provided by residues 91 to 93 (GTT) and 115 to 118 (AHNM). Residue His147 is the Proton donor/acceptor of the active site. Residue His148 participates in (S)-2,3,4,5-tetrahydrodipicolinate binding. The active-site Proton donor is Lys151. Residue 157–158 (GT) coordinates (S)-2,3,4,5-tetrahydrodipicolinate.

The protein belongs to the DapB family.

The protein localises to the cytoplasm. The catalysed reaction is (S)-2,3,4,5-tetrahydrodipicolinate + NAD(+) + H2O = (2S,4S)-4-hydroxy-2,3,4,5-tetrahydrodipicolinate + NADH + H(+). It catalyses the reaction (S)-2,3,4,5-tetrahydrodipicolinate + NADP(+) + H2O = (2S,4S)-4-hydroxy-2,3,4,5-tetrahydrodipicolinate + NADPH + H(+). It participates in amino-acid biosynthesis; L-lysine biosynthesis via DAP pathway; (S)-tetrahydrodipicolinate from L-aspartate: step 4/4. In terms of biological role, catalyzes the conversion of 4-hydroxy-tetrahydrodipicolinate (HTPA) to tetrahydrodipicolinate. This is 4-hydroxy-tetrahydrodipicolinate reductase from Helicobacter pylori (strain HPAG1).